A 250-amino-acid polypeptide reads, in one-letter code: tRNA pseudouridine synthase A (250 aa).

Catalysis depends on Asp52, which acts as the Nucleophile. Tyr111 serves as a coordination point for substrate.

This sequence belongs to the tRNA pseudouridine synthase TruA family. Homodimer.

The enzyme catalyses uridine(38/39/40) in tRNA = pseudouridine(38/39/40) in tRNA. Formation of pseudouridine at positions 38, 39 and 40 in the anticodon stem and loop of transfer RNAs. The polypeptide is tRNA pseudouridine synthase A (Methylobacterium sp. (strain 4-46)).